A 360-amino-acid chain; its full sequence is Nicotinate-nucleotide--dimethylbenzimidazole phosphoribosyltransferase (360 aa).

Residue Glu-327 is the Proton acceptor of the active site.

The protein belongs to the CobT family.

It catalyses the reaction 5,6-dimethylbenzimidazole + nicotinate beta-D-ribonucleotide = alpha-ribazole 5'-phosphate + nicotinate + H(+). It functions in the pathway nucleoside biosynthesis; alpha-ribazole biosynthesis; alpha-ribazole from 5,6-dimethylbenzimidazole: step 1/2. Catalyzes the synthesis of alpha-ribazole-5'-phosphate from nicotinate mononucleotide (NAMN) and 5,6-dimethylbenzimidazole (DMB). This chain is Nicotinate-nucleotide--dimethylbenzimidazole phosphoribosyltransferase, found in Shewanella baltica (strain OS223).